We begin with the raw amino-acid sequence, 261 residues long: Cytochrome c oxidase subunit 3 (261 aa).

Residues 1–15 lie on the Mitochondrial matrix side of the membrane; that stretch reads MTKQMHAFHMVNPSP. The chain crosses the membrane as a helical span at residues 16–34; that stretch reads WPLTGAASAFMLTSGLAMW. Over 35–40 the chain is Mitochondrial intermembrane; that stretch reads FHKHSN. A helical transmembrane segment spans residues 41 to 66; it reads TLIFLSMILMLLTMYQWWRDITREGT. The Mitochondrial matrix portion of the chain corresponds to 67–72; that stretch reads FQGHHT. The chain crosses the membrane as a helical span at residues 73–105; it reads SLVQKSLRYGMILFIVSEVCFFFGFFWTFYHSS. Over 106–128 the chain is Mitochondrial intermembrane; sequence LSPSPDLGMMWPPKGVIPLDPFE. Residues 129–152 traverse the membrane as a helical segment; it reads IPLLNTAILLGSGVSVTWAHHSLM. Residues 153–155 are Mitochondrial matrix-facing; that stretch reads EKT. The helical transmembrane segment at 156 to 183 threads the bilayer; that stretch reads HKDMVISLSITIILGIYFTLLQGMEYFN. Residues 184–190 are Mitochondrial intermembrane-facing; sequence STFNISD. The helical transmembrane segment at 191–223 threads the bilayer; the sequence is NAYGSTFFVATGFHGGHVIIGTLFLTVCLLRQL. The Mitochondrial matrix segment spans residues 224–232; sequence MFHFTSSHH. Residues 233 to 256 form a helical membrane-spanning segment; the sequence is FGFEAAAWYWHFVDVVWLFLFISI. Over 257–261 the chain is Mitochondrial intermembrane; sequence YWWGS.

The protein belongs to the cytochrome c oxidase subunit 3 family. Component of the cytochrome c oxidase (complex IV, CIV), a multisubunit enzyme composed of 14 subunits. The complex is composed of a catalytic core of 3 subunits MT-CO1, MT-CO2 and MT-CO3, encoded in the mitochondrial DNA, and 11 supernumerary subunits COX4I, COX5A, COX5B, COX6A, COX6B, COX6C, COX7A, COX7B, COX7C, COX8 and NDUFA4, which are encoded in the nuclear genome. The complex exists as a monomer or a dimer and forms supercomplexes (SCs) in the inner mitochondrial membrane with NADH-ubiquinone oxidoreductase (complex I, CI) and ubiquinol-cytochrome c oxidoreductase (cytochrome b-c1 complex, complex III, CIII), resulting in different assemblies (supercomplex SCI(1)III(2)IV(1) and megacomplex MCI(2)III(2)IV(2)).

It is found in the mitochondrion inner membrane. The catalysed reaction is 4 Fe(II)-[cytochrome c] + O2 + 8 H(+)(in) = 4 Fe(III)-[cytochrome c] + 2 H2O + 4 H(+)(out). In terms of biological role, component of the cytochrome c oxidase, the last enzyme in the mitochondrial electron transport chain which drives oxidative phosphorylation. The respiratory chain contains 3 multisubunit complexes succinate dehydrogenase (complex II, CII), ubiquinol-cytochrome c oxidoreductase (cytochrome b-c1 complex, complex III, CIII) and cytochrome c oxidase (complex IV, CIV), that cooperate to transfer electrons derived from NADH and succinate to molecular oxygen, creating an electrochemical gradient over the inner membrane that drives transmembrane transport and the ATP synthase. Cytochrome c oxidase is the component of the respiratory chain that catalyzes the reduction of oxygen to water. Electrons originating from reduced cytochrome c in the intermembrane space (IMS) are transferred via the dinuclear copper A center (CU(A)) of subunit 2 and heme A of subunit 1 to the active site in subunit 1, a binuclear center (BNC) formed by heme A3 and copper B (CU(B)). The BNC reduces molecular oxygen to 2 water molecules using 4 electrons from cytochrome c in the IMS and 4 protons from the mitochondrial matrix. The protein is Cytochrome c oxidase subunit 3 (MT-CO3) of Myxine glutinosa (Atlantic hagfish).